The primary structure comprises 203 residues: NAD(P)H dehydrogenase (quinone) (203 aa).

The region spanning 3–194 (VLIPFYSMYG…AGARYQGKYI (192 aa)) is the Flavodoxin-like domain. FMN contacts are provided by residues 9-14 (SMYGHI) and 82-84 (TRF). Y11 provides a ligand contact to NAD(+). W102 lines the substrate pocket. FMN contacts are provided by residues 117–123 (SSATQHG) and H138.

The protein belongs to the WrbA family. The cofactor is FMN.

The enzyme catalyses a quinone + NADH + H(+) = a quinol + NAD(+). It catalyses the reaction a quinone + NADPH + H(+) = a quinol + NADP(+). The chain is NAD(P)H dehydrogenase (quinone) from Geobacter metallireducens (strain ATCC 53774 / DSM 7210 / GS-15).